Here is a 178-residue protein sequence, read N- to C-terminus: Cytidylate kinase (178 aa).

Residue 7–15 coordinates ATP; the sequence is GLPGTGTTT.

Belongs to the cytidylate kinase family. Type 2 subfamily.

It is found in the cytoplasm. The catalysed reaction is CMP + ATP = CDP + ADP. It catalyses the reaction dCMP + ATP = dCDP + ADP. This Methanococcus aeolicus (strain ATCC BAA-1280 / DSM 17508 / OCM 812 / Nankai-3) protein is Cytidylate kinase.